The following is a 116-amino-acid chain: Aspartate 1-decarboxylase (116 aa).

S25 (schiff-base intermediate with substrate; via pyruvic acid) is an active-site residue. S25 carries the post-translational modification Pyruvic acid (Ser). Residue T57 coordinates substrate. The Proton donor role is filled by Y58. A substrate-binding site is contributed by 72-74 (GAA).

The protein belongs to the PanD family. In terms of assembly, heterooctamer of four alpha and four beta subunits. Requires pyruvate as cofactor. In terms of processing, is synthesized initially as an inactive proenzyme, which is activated by self-cleavage at a specific serine bond to produce a beta-subunit with a hydroxyl group at its C-terminus and an alpha-subunit with a pyruvoyl group at its N-terminus.

It is found in the cytoplasm. The catalysed reaction is L-aspartate + H(+) = beta-alanine + CO2. Its pathway is cofactor biosynthesis; (R)-pantothenate biosynthesis; beta-alanine from L-aspartate: step 1/1. Its function is as follows. Catalyzes the pyruvoyl-dependent decarboxylation of aspartate to produce beta-alanine. The polypeptide is Aspartate 1-decarboxylase (Helicobacter pylori (strain HPAG1)).